A 622-amino-acid chain; its full sequence is Mitochondrial Rho GTPase 2 (622 aa).

Residues 1-596 (MRRDVRILLL…ELHPTPFWLR (596 aa)) lie on the Cytoplasmic side of the membrane. Residues 2–168 (RRDVRILLLG…FYYAQKAVLH (167 aa)) form the Miro 1 domain. GTP is bound by residues G16, K17, T18, and S19. T18 contributes to the Mg(2+) binding site. Position 57 (D57) interacts with Mg(2+). S59 contacts GTP. A Glycyl lysine isopeptide (Lys-Gly) (interchain with G-Cter in ubiquitin) cross-link involves residue K96. 5 residues coordinate GTP: N118, K119, D121, A149, and K150. Residue K119 forms a Glycyl lysine isopeptide (Lys-Gly) (interchain with G-Cter in ubiquitin) linkage. Residue K164 forms a Glycyl lysine isopeptide (Lys-Gly) (interchain with G-Cter in ubiquitin) linkage. 2 consecutive EF-hand domains span residues 184-219 (ACAQ…CFGH) and 304-339 (RGYQ…FSVA). Residues D197, D199, D201, E208, D317, D319, D321, and E328 each coordinate Ca(2+). Residues 415 to 580 (RSVLMCKVLG…FTQLATMATF (166 aa)) form the Miro 2 domain. Positions 427, 429, 430, 431, and 432 each coordinate GTP. S431 contacts Mg(2+). E475 contacts Mg(2+). GTP is bound by residues K529, D531, and C560. The helical; Anchor for type IV membrane protein transmembrane segment at 597–619 (GVLVAVGTAVAAVLSFSLYRVLV) threads the bilayer. The Mitochondrial intermembrane segment spans residues 620–622 (KSR).

Belongs to the mitochondrial Rho GTPase family. As to quaternary structure, homodimer. Interacts with the kinesin-binding proteins TRAK1/OIP106 and TRAK2/GRIF1, forming a link between mitochondria and the trafficking apparatus of the microtubules. Interacts with ARMCX3. Found in a complex with KIF5B, OGT, RHOT1 and TRAK1. Post-translationally, ubiquitinated by PRKN in a PINK1-dependent manner, leading to its degradation.

The protein resides in the mitochondrion outer membrane. It carries out the reaction GTP + H2O = GDP + phosphate + H(+). It catalyses the reaction ATP + H2O = ADP + phosphate + H(+). The enzyme catalyses UTP + H2O = UDP + phosphate + H(+). Functionally, atypical mitochondrial nucleoside-triphosphatase (NTPase) involved in mitochondrial trafficking. Probably involved in control of anterograde transport of mitochondria and their subcellular distribution. Can hydrolyze GTP, ATP and UTP. This chain is Mitochondrial Rho GTPase 2 (Rhot2), found in Rattus norvegicus (Rat).